The sequence spans 260 residues: Indole-3-glycerol phosphate synthase (260 aa).

The protein belongs to the TrpC family.

It catalyses the reaction 1-(2-carboxyphenylamino)-1-deoxy-D-ribulose 5-phosphate + H(+) = (1S,2R)-1-C-(indol-3-yl)glycerol 3-phosphate + CO2 + H2O. Its pathway is amino-acid biosynthesis; L-tryptophan biosynthesis; L-tryptophan from chorismate: step 4/5. The protein is Indole-3-glycerol phosphate synthase of Neisseria meningitidis serogroup B (strain ATCC BAA-335 / MC58).